The following is a 156-amino-acid chain: Small ribosomal subunit protein uS7 (156 aa).

It belongs to the universal ribosomal protein uS7 family. Part of the 30S ribosomal subunit. Contacts proteins S9 and S11.

In terms of biological role, one of the primary rRNA binding proteins, it binds directly to 16S rRNA where it nucleates assembly of the head domain of the 30S subunit. Is located at the subunit interface close to the decoding center, probably blocks exit of the E-site tRNA. This Rhizobium johnstonii (strain DSM 114642 / LMG 32736 / 3841) (Rhizobium leguminosarum bv. viciae) protein is Small ribosomal subunit protein uS7.